The following is a 185-amino-acid chain: Acireductone dioxygenase (185 aa).

The tract at residues 1-22 is disordered; sequence MSRLSIHPEGSTNATSPAEPLL. Residues histidine 102, histidine 104, glutamate 108, and histidine 146 each contribute to the Fe(2+) site. Ni(2+) contacts are provided by histidine 102, histidine 104, glutamate 108, and histidine 146.

Belongs to the acireductone dioxygenase (ARD) family. In terms of assembly, monomer. Fe(2+) serves as cofactor. Requires Ni(2+) as cofactor.

It catalyses the reaction 1,2-dihydroxy-5-(methylsulfanyl)pent-1-en-3-one + O2 = 3-(methylsulfanyl)propanoate + CO + formate + 2 H(+). The catalysed reaction is 1,2-dihydroxy-5-(methylsulfanyl)pent-1-en-3-one + O2 = 4-methylsulfanyl-2-oxobutanoate + formate + 2 H(+). It functions in the pathway amino-acid biosynthesis; L-methionine biosynthesis via salvage pathway; L-methionine from S-methyl-5-thio-alpha-D-ribose 1-phosphate: step 5/6. Functionally, catalyzes 2 different reactions between oxygen and the acireductone 1,2-dihydroxy-3-keto-5-methylthiopentene (DHK-MTPene) depending upon the metal bound in the active site. Fe-containing acireductone dioxygenase (Fe-ARD) produces formate and 2-keto-4-methylthiobutyrate (KMTB), the alpha-ketoacid precursor of methionine in the methionine recycle pathway. Ni-containing acireductone dioxygenase (Ni-ARD) produces methylthiopropionate, carbon monoxide and formate, and does not lie on the methionine recycle pathway. The sequence is that of Acireductone dioxygenase from Prochlorococcus marinus (strain MIT 9313).